Here is a 126-residue protein sequence, read N- to C-terminus: Small ribosomal subunit protein uS12 (126 aa).

Asp89 carries the 3-methylthioaspartic acid modification. The disordered stretch occupies residues 106–126 (GVRERRRSRSKYGAKMPRSAA).

Belongs to the universal ribosomal protein uS12 family. Part of the 30S ribosomal subunit. Contacts proteins S8 and S17. May interact with IF1 in the 30S initiation complex.

With S4 and S5 plays an important role in translational accuracy. Its function is as follows. Interacts with and stabilizes bases of the 16S rRNA that are involved in tRNA selection in the A site and with the mRNA backbone. Located at the interface of the 30S and 50S subunits, it traverses the body of the 30S subunit contacting proteins on the other side and probably holding the rRNA structure together. The combined cluster of proteins S8, S12 and S17 appears to hold together the shoulder and platform of the 30S subunit. In Tremblaya princeps, this protein is Small ribosomal subunit protein uS12.